The sequence spans 467 residues: Putative serine/threonine-protein kinase R400 (467 aa).

The Protein kinase domain maps to 99 to 467 (GVKLIYIKSG…STGQKPTKKV (369 aa)). Residues 105-113 (IKSGTTGHT) and Lys129 contribute to the ATP site. Asp272 functions as the Proton acceptor in the catalytic mechanism. The interval 443 to 467 (LFQQGNGSKQPVPKKSTGQKPTKKV) is disordered. Residues 458-467 (STGQKPTKKV) show a composition bias toward polar residues.

It belongs to the protein kinase superfamily. Ser/Thr protein kinase family.

It localises to the virion. The enzyme catalyses L-seryl-[protein] + ATP = O-phospho-L-seryl-[protein] + ADP + H(+). The catalysed reaction is L-threonyl-[protein] + ATP = O-phospho-L-threonyl-[protein] + ADP + H(+). This chain is Putative serine/threonine-protein kinase R400, found in Acanthamoeba polyphaga mimivirus (APMV).